A 137-amino-acid polypeptide reads, in one-letter code: Phosphatidylinositol N-acetylglucosaminyltransferase subunit P (137 aa).

A run of 2 helical transmembrane segments spans residues 16–36 (VYGF…LIWG) and 58–78 (MAMP…YIGL).

It belongs to the PIGP family.

The protein localises to the membrane. The catalysed reaction is a 1,2-diacyl-sn-glycero-3-phospho-(1D-myo-inositol) + UDP-N-acetyl-alpha-D-glucosamine = a 6-(N-acetyl-alpha-D-glucosaminyl)-1-(1,2-diacyl-sn-glycero-3-phospho)-1D-myo-inositol + UDP + H(+). The protein operates within glycolipid biosynthesis; glycosylphosphatidylinositol-anchor biosynthesis. Part of the complex catalyzing the transfer of N-acetylglucosamine from UDP-N-acetylglucosamine to phosphatidylinositol, the first step of GPI biosynthesis. This Arabidopsis thaliana (Mouse-ear cress) protein is Phosphatidylinositol N-acetylglucosaminyltransferase subunit P.